The sequence spans 160 residues: MAIQILVNLILSVFWLFVTGSYNFNNFILGYLFALLLVYIMRGVLPGRFYLITVYKIIKLFLVFLIELIKANIDVIRIVVKPNIDNEPAFFTYNTDLKKDWQIVLLSNLITLTPGTIVLGISDDRTKIYIHSIDFSTKEEEVESIKSSLEKVVREVGENE.

A run of 4 helical transmembrane segments spans residues 1–21 (MAIQILVNLILSVFWLFVTGS), 27–47 (FILGYLFALLLVYIMRGVLPG), 49–69 (FYLITVYKIIKLFLVFLIELI), and 101–121 (WQIVLLSNLITLTPGTIVLGI).

This sequence belongs to the CPA3 antiporters (TC 2.A.63) subunit E family. May form a heterooligomeric complex that consists of seven subunits: mnhA1, mnhB1, mnhC1, mnhD1, mnhE1, mnhF1 and mnhG1.

It localises to the cell membrane. Mnh complex is a Na(+)/H(+) antiporter involved in Na(+) excretion. This chain is Na(+)/H(+) antiporter subunit E1 (mnhE1), found in Staphylococcus saprophyticus subsp. saprophyticus (strain ATCC 15305 / DSM 20229 / NCIMB 8711 / NCTC 7292 / S-41).